Reading from the N-terminus, the 251-residue chain is Chlorophyll a-b binding protein 4, chloroplastic (251 aa).

Ser-35 carries the post-translational modification Phosphoserine. Trp-57 provides a ligand contact to chlorophyll b. The chlorophyll a site is built by Phe-77 and Glu-96. Arg-101 lines the chlorophyll b pocket. The next 2 membrane-spanning stretches (helical) occupy residues 102–122 and 135–155; these read WAMLGVAGMLLPEVFTKIGII and YFASSSTLFVIEFILFHYVEI. Chlorophyll b-binding residues include Ser-138, Val-144, Glu-154, and Arg-157. Lys-204, Glu-205, Asn-208, Arg-210, Gln-222, and His-237 together coordinate chlorophyll a.

Belongs to the light-harvesting chlorophyll a/b-binding (LHC) protein family. The LHC complex consists of chlorophyll a-b binding proteins. Red-emitting heterodimer with LHCA1. It depends on Binds at least 14 chlorophylls (8 Chl-a and 6 Chl-b) and carotenoids such as lutein and neoxanthin. as a cofactor. Photoregulated by reversible phosphorylation of its threonine residues.

The protein resides in the plastid. It is found in the chloroplast thylakoid membrane. In terms of biological role, the light-harvesting complex (LHC) functions as a light receptor, it captures and delivers excitation energy to photosystems with which it is closely associated. The sequence is that of Chlorophyll a-b binding protein 4, chloroplastic from Arabidopsis thaliana (Mouse-ear cress).